Consider the following 144-residue polypeptide: Ribosomal RNA large subunit methyltransferase H (144 aa).

S-adenosyl-L-methionine-binding positions include Leu63, Gly92, and 111 to 116 (LSAMTL).

It belongs to the RNA methyltransferase RlmH family. As to quaternary structure, homodimer.

It localises to the cytoplasm. It catalyses the reaction pseudouridine(1915) in 23S rRNA + S-adenosyl-L-methionine = N(3)-methylpseudouridine(1915) in 23S rRNA + S-adenosyl-L-homocysteine + H(+). In terms of biological role, specifically methylates the pseudouridine at position 1915 (m3Psi1915) in 23S rRNA. The chain is Ribosomal RNA large subunit methyltransferase H from Prochlorococcus marinus (strain MIT 9313).